The sequence spans 623 residues: MINKITKPKLLIGYYLLLFSLIRCLPEKESSYKDLFTSLLFLPNQTNSNQVNSVSINNDPANPNPVNPASANNNQVNAVPENDDPANLNPVNPASANSNQVNAAPENGSPADPNPANLASANNNQVNAVPANNYFTKEDSSNNIPKKVNSKNVEIKVLSHNVFMLPTNLPRWGNLGHDERAKRISKSDYVKNQDVIVFEEAFDTSARKILLDNLREEYPYQTDVVGRTKKNWDASLGNFRSYSLVNGGVVILSKWPIEEKIQYIFNDSGCGADWFANKGFVYVKINKEGKKFHVIGTHAQSQDQNCSNLGIPNRANQFDDIRNFIYSKNIPKDETVLIVGDLNVIKESNEYYDMISRLNVNEPRYVGVPFTWDAKTNEIAAYYYENEEPVYLDYIFVSKSHAQPPVWQNLAYDPVSKQTWTVSGYTSDEFSDHYPIYGFVYADPSTPTKSGHKKKYDQVSFQSAANGKYIQADPNRKNGWLKADAVIETDFTKFNLLQEGNLNPSCIKNGLVRIESSRFLNYFWNWWLGGGSGNYGYYSKFNDASNQLEIINLSDECLENGSKIVFKDYDTYSRNHYYLTVWDKGNWNEHLYLWKDSISQREIFYLKLNSTPVRNWSADLIYR.

The N-terminal stretch at 1–25 is a signal peptide; that stretch reads MINKITKPKLLIGYYLLLFSLIRCL. Low complexity-rich tracts occupy residues 51 to 61 and 67 to 80; these read VNSVSINNDPA and NPAS…NAVP. Residues 51–121 form a disordered region; sequence VNSVSINNDP…DPNPANLASA (71 aa). The span at 89 to 102 shows a compositional bias: polar residues; sequence NPVNPASANSNQVN. Residues 110 to 121 are compositionally biased toward low complexity; the sequence is PADPNPANLASA.

The protein resides in the secreted. The catalysed reaction is a sphingomyelin + H2O = phosphocholine + an N-acylsphing-4-enine + H(+). The polypeptide is Sphingomyelinase C 2 (sph2) (Leptospira interrogans serogroup Icterohaemorrhagiae serovar Lai (strain 56601)).